The primary structure comprises 132 residues: Large ribosomal subunit protein uL14 (132 aa).

Belongs to the universal ribosomal protein uL14 family. Part of the 50S ribosomal subunit. Forms a cluster with proteins L3 and L24e, part of which may contact the 16S rRNA in 2 intersubunit bridges.

Its function is as follows. Binds to 23S rRNA. Forms part of two intersubunit bridges in the 70S ribosome. The protein is Large ribosomal subunit protein uL14 of Methanoregula boonei (strain DSM 21154 / JCM 14090 / 6A8).